Here is a 520-residue protein sequence, read N- to C-terminus: GMP synthase [glutamine-hydrolyzing] (520 aa).

Residues His-9–Asp-202 enclose the Glutamine amidotransferase type-1 domain. The Nucleophile role is filled by Cys-86. Catalysis depends on residues His-176 and Glu-178. The GMPS ATP-PPase domain maps to Trp-203–Arg-395. An ATP-binding site is contributed by Ser-230–Ser-236.

Homodimer.

The enzyme catalyses XMP + L-glutamine + ATP + H2O = GMP + L-glutamate + AMP + diphosphate + 2 H(+). It participates in purine metabolism; GMP biosynthesis; GMP from XMP (L-Gln route): step 1/1. Functionally, catalyzes the synthesis of GMP from XMP. The protein is GMP synthase [glutamine-hydrolyzing] of Phenylobacterium zucineum (strain HLK1).